A 90-amino-acid chain; its full sequence is Acylphosphatase (90 aa).

The Acylphosphatase-like domain maps to 4-90; sequence CVRVRVSGRV…KGHDDFKIIY (87 aa). Residues arginine 19 and asparagine 37 contribute to the active site.

This sequence belongs to the acylphosphatase family.

It catalyses the reaction an acyl phosphate + H2O = a carboxylate + phosphate + H(+). The polypeptide is Acylphosphatase (acyP) (Methanothrix thermoacetophila (strain DSM 6194 / JCM 14653 / NBRC 101360 / PT) (Methanosaeta thermophila)).